A 277-amino-acid polypeptide reads, in one-letter code: Deoxyguanosine kinase, mitochondrial (277 aa).

Residues 1–39 (MAAGRFLLRRLRASFRSPLRNALVDAPHARAMHDGGGPR) constitute a mitochondrion transit peptide. Residue 45–53 (GNIAVGKST) coordinates ATP. Positions 70, 100, 111, and 118 each coordinate substrate. E141 (proton acceptor) is an active-site residue. Residues R142 and D147 each coordinate substrate. 206–208 (RDR) provides a ligand contact to ATP. Position 211 (E211) interacts with substrate. An ATP-binding site is contributed by 254 to 256 (EDF).

The protein belongs to the DCK/DGK family. Homodimer. As to expression, spleen and thymus. Expressed at much lower levels in the brain and liver.

It is found in the mitochondrion. The protein localises to the cytoplasm. The catalysed reaction is 2'-deoxyguanosine + ATP = dGMP + ADP + H(+). It carries out the reaction 2'-deoxyadenosine + ATP = dAMP + ADP + H(+). Its function is as follows. Phosphorylates deoxyguanosine and deoxyadenosine in the mitochondrial matrix, with the highest efficiency for deoxyguanosine. In non-replicating cells, where cytosolic dNTP synthesis is down-regulated, mtDNA synthesis depends solely on DGUOK and TK2. Phosphorylates certain nucleoside analogs. Widely used as target of antiviral and chemotherapeutic agents. The polypeptide is Deoxyguanosine kinase, mitochondrial (Dguok) (Mus musculus (Mouse)).